Reading from the N-terminus, the 263-residue chain is 2-keto-4-pentenoate hydratase 1 (263 aa).

It belongs to the hydratase/decarboxylase family. MhpD subfamily. It depends on a divalent metal cation as a cofactor.

The catalysed reaction is (S)-4-hydroxy-2-oxopentanoate = (2Z)-2-hydroxypenta-2,4-dienoate + H2O. Its pathway is aromatic compound metabolism; 3-phenylpropanoate degradation. Its function is as follows. Catalyzes the conversion of 2-hydroxypentadienoic acid (enolic form of 2-oxopent-4-enoate) to 4-hydroxy-2-ketopentanoic acid. This chain is 2-keto-4-pentenoate hydratase 1, found in Dechloromonas aromatica (strain RCB).